Here is a 388-residue protein sequence, read N- to C-terminus: Glutamate 5-kinase (388 aa).

K21 contacts ATP. Residues S61, D148, and N160 each contribute to the substrate site. ATP contacts are provided by residues 180-181 (TD) and 222-228 (TGGMITK). The PUA domain maps to 285–363 (RGSVFLDPGA…RWLARELGAE (79 aa)).

Belongs to the glutamate 5-kinase family.

The protein resides in the cytoplasm. The enzyme catalyses L-glutamate + ATP = L-glutamyl 5-phosphate + ADP. Its pathway is amino-acid biosynthesis; L-proline biosynthesis; L-glutamate 5-semialdehyde from L-glutamate: step 1/2. Functionally, catalyzes the transfer of a phosphate group to glutamate to form L-glutamate 5-phosphate. In Thermobifida fusca (strain YX), this protein is Glutamate 5-kinase.